A 433-amino-acid chain; its full sequence is Enolase (433 aa).

Gln164 is a binding site for (2R)-2-phosphoglycerate. The active-site Proton donor is Glu206. Residues Asp243, Glu289, and Asp316 each contribute to the Mg(2+) site. Lys341, Arg370, Ser371, and Lys392 together coordinate (2R)-2-phosphoglycerate. Residue Lys341 is the Proton acceptor of the active site.

This sequence belongs to the enolase family. It depends on Mg(2+) as a cofactor.

It localises to the cytoplasm. The protein resides in the secreted. Its subcellular location is the cell surface. The enzyme catalyses (2R)-2-phosphoglycerate = phosphoenolpyruvate + H2O. The protein operates within carbohydrate degradation; glycolysis; pyruvate from D-glyceraldehyde 3-phosphate: step 4/5. In terms of biological role, catalyzes the reversible conversion of 2-phosphoglycerate (2-PG) into phosphoenolpyruvate (PEP). It is essential for the degradation of carbohydrates via glycolysis. The chain is Enolase from Borreliella burgdorferi (strain ZS7) (Borrelia burgdorferi).